The sequence spans 440 residues: Xylose isomerase (440 aa).

Residues His-101 and Asp-104 contribute to the active site. Mg(2+)-binding residues include Glu-232, Glu-268, His-271, Asp-296, Asp-307, Asp-309, and Asp-339.

The protein belongs to the xylose isomerase family. Homotetramer. It depends on Mg(2+) as a cofactor.

The protein localises to the cytoplasm. The enzyme catalyses alpha-D-xylose = alpha-D-xylulofuranose. This chain is Xylose isomerase, found in Cronobacter sakazakii (strain ATCC BAA-894) (Enterobacter sakazakii).